The sequence spans 71 residues: V-type proton ATPase subunit e (71 aa).

At Met1–Ser2 the chain is on the lumenal side. Residues Phe3 to Val23 form a helical membrane-spanning segment. Residues Thr24–Thr35 are Cytoplasmic-facing. Residues Ser36 to Leu56 traverse the membrane as a helical segment. Topologically, residues His57 to Tyr71 are lumenal.

This sequence belongs to the V-ATPase e1/e2 subunit family. As to quaternary structure, V-ATPase is a heteromultimeric enzyme composed of a peripheral catalytic V1 complex (components A to H) attached to an integral membrane V0 proton pore complex (components: a, c, c', c'', d, e, f and VOA1).

It is found in the vacuole membrane. Subunit of the V0 complex of vacuolar(H+)-ATPase (V-ATPase), a multisubunit enzyme composed of a peripheral complex (V1) that hydrolyzes ATP and a membrane integral complex (V0) that translocates protons. V-ATPase is responsible for acidifying and maintaining the pH of intracellular compartments. The protein is V-type proton ATPase subunit e (VMA9) of Cryptococcus neoformans var. neoformans serotype D (strain JEC21 / ATCC MYA-565) (Filobasidiella neoformans).